A 336-amino-acid chain; its full sequence is Histidinol-phosphate aminotransferase (336 aa).

Lys204 is modified (N6-(pyridoxal phosphate)lysine).

The protein belongs to the class-II pyridoxal-phosphate-dependent aminotransferase family. Histidinol-phosphate aminotransferase subfamily. Pyridoxal 5'-phosphate serves as cofactor.

The catalysed reaction is L-histidinol phosphate + 2-oxoglutarate = 3-(imidazol-4-yl)-2-oxopropyl phosphate + L-glutamate. The protein operates within amino-acid biosynthesis; L-histidine biosynthesis; L-histidine from 5-phospho-alpha-D-ribose 1-diphosphate: step 7/9. The protein is Histidinol-phosphate aminotransferase of Thermococcus kodakarensis (strain ATCC BAA-918 / JCM 12380 / KOD1) (Pyrococcus kodakaraensis (strain KOD1)).